The chain runs to 284 residues: MTAQLIDGKAIAANLRQQIAQRVTERRQQGLRVPGLAVILVGTDPASQVYVAHKRKDCEEVGFLSQAYDLPAETSQDDLLALIDRLNDDPAIDGILVQLPLPAHLDASLLLERIHPDKDVDGFHPYNIGRLAQRMPLLRPCTPKGIMTLLASTGADLYGMDAVVVGASNIVGRPMALELLLGGCTVTVTHRFTRDLADHVSRADLVVVAAGKPGLVKGEWIKEGAIVIDVGINRQADGRLVGDVEYEVAAQRASWITPVPGGVGPMTRACLLENTLHAAEHLHD.

NADP(+)-binding positions include 166-168 (GAS) and I232.

Belongs to the tetrahydrofolate dehydrogenase/cyclohydrolase family. In terms of assembly, homodimer.

The enzyme catalyses (6R)-5,10-methylene-5,6,7,8-tetrahydrofolate + NADP(+) = (6R)-5,10-methenyltetrahydrofolate + NADPH. The catalysed reaction is (6R)-5,10-methenyltetrahydrofolate + H2O = (6R)-10-formyltetrahydrofolate + H(+). It functions in the pathway one-carbon metabolism; tetrahydrofolate interconversion. Functionally, catalyzes the oxidation of 5,10-methylenetetrahydrofolate to 5,10-methenyltetrahydrofolate and then the hydrolysis of 5,10-methenyltetrahydrofolate to 10-formyltetrahydrofolate. This Pseudomonas aeruginosa (strain LESB58) protein is Bifunctional protein FolD.